The primary structure comprises 172 residues: Protein-export protein SecB (172 aa).

It belongs to the SecB family. As to quaternary structure, homotetramer, a dimer of dimers. One homotetramer interacts with 1 SecA dimer.

The protein localises to the cytoplasm. Its function is as follows. One of the proteins required for the normal export of preproteins out of the cell cytoplasm. It is a molecular chaperone that binds to a subset of precursor proteins, maintaining them in a translocation-competent state. It also specifically binds to its receptor SecA. The chain is Protein-export protein SecB from Haemophilus ducreyi (strain 35000HP / ATCC 700724).